The following is a 284-amino-acid chain: Tropomyosin Per a 7.0101 (284 aa).

Residues 22 to 266 (ALLCEQQARD…EDELVHEKEK (245 aa)) adopt a coiled-coil conformation.

This sequence belongs to the tropomyosin family. As to quaternary structure, homodimer.

In terms of biological role, tropomyosin, in association with the troponin complex, plays a central role in the calcium dependent regulation of muscle contraction. This chain is Tropomyosin Per a 7.0101, found in Periplaneta americana (American cockroach).